Consider the following 248-residue polypeptide: UPF0246 protein RC0754 (248 aa).

Belongs to the UPF0246 family.

This chain is UPF0246 protein RC0754, found in Rickettsia conorii (strain ATCC VR-613 / Malish 7).